The following is a 260-amino-acid chain: Transmembrane protein 70, mitochondrial (260 aa).

The transit peptide at 1–81 (MLFLALGSPW…PVYWEGYVRF (81 aa)) directs the protein to the mitochondrion. The Mitochondrial matrix portion of the chain corresponds to 82 to 102 (LNTPSDKSEDGRLIYTGNMAR). A helical transmembrane segment spans residues 103–123 (AVFGVKCFSYSTSLIGLTFLP). The Mitochondrial intermembrane segment spans residues 124–141 (YIFTQNNAISESVPLPIQ). A helical membrane pass occupies residues 142–162 (IIFYGIMGSFTVITPVLLHFI). The Mitochondrial matrix portion of the chain corresponds to 163–260 (TKGYVIRLYH…SEEKRHKDDK (98 aa)).

This sequence belongs to the TMEM70 family. Homooligomer. Interacts (homooligomer form) with ATP5MC1; this interaction facilitates the oligomer formation of subunit c/ATP5MC1 (c-ring) and the c-ring membrane insertion and also protects ATP5MC1 against intramitochondrial proteolysis. Interacts with the core subunits TMEM126B, NDUFAF1, ECSIT and ACAD9 of the MCIA complex. Interacts with ATP5MC3, TMEM242 and TIMMDC1. Lower expressed in the heart than in the liver (at protein level).

The protein resides in the mitochondrion inner membrane. Its function is as follows. Scaffold protein that participates in the c-ring assembly of mitochondrial ATP synthase (F(1)F(0) ATP synthase or complex V) by facilitating the membrane insertion and oligomer formation of the subunit c/ATP5MC1 through its interaction. Therefore, participates in the early stage of mitochondrial ATP synthase biogenesis and also protects subunit c/ATP5MC1 against intramitochondrial proteolysis. In addition, binds the mitochondrial proton-transporting ATP synthase complexes I and may play a role in the stability of its membrane-bound subassemblies. The sequence is that of Transmembrane protein 70, mitochondrial from Homo sapiens (Human).